The sequence spans 295 residues: Ethanolamine ammonia-lyase small subunit (295 aa).

Residues V207, E228, and C258 each contribute to the adenosylcob(III)alamin site.

The protein belongs to the EutC family. The basic unit is a heterodimer which dimerizes to form tetramers. The heterotetramers trimerize; 6 large subunits form a core ring with 6 small subunits projecting outwards. Adenosylcob(III)alamin is required as a cofactor.

It is found in the bacterial microcompartment. It carries out the reaction ethanolamine = acetaldehyde + NH4(+). The protein operates within amine and polyamine degradation; ethanolamine degradation. In terms of biological role, catalyzes the deamination of various vicinal amino-alcohols to oxo compounds. Allows this organism to utilize ethanolamine as the sole source of nitrogen and carbon in the presence of external vitamin B12. The sequence is that of Ethanolamine ammonia-lyase small subunit from Escherichia coli O139:H28 (strain E24377A / ETEC).